We begin with the raw amino-acid sequence, 456 residues long: Bifunctional protein GlmU (456 aa).

The tract at residues 1 to 229 is pyrophosphorylase; it reads MTKKALSAVI…VMEVEGANNR (229 aa). Residues 11–14, lysine 25, glutamine 76, 81–82, 103–105, glycine 140, glutamate 154, asparagine 169, and asparagine 227 contribute to the UDP-N-acetyl-alpha-D-glucosamine site; these read LAAG, GT, and YGD. Residue aspartate 105 coordinates Mg(2+). Asparagine 227 lines the Mg(2+) pocket. A linker region spans residues 230 to 250; that stretch reads LQLAALERYLQNKQASKLLLE. The tract at residues 251–456 is N-acetyltransferase; that stretch reads GVMIYDPARF…QGWQRPIKKK (206 aa). 2 residues coordinate UDP-N-acetyl-alpha-D-glucosamine: arginine 333 and lysine 351. Residue histidine 363 is the Proton acceptor of the active site. UDP-N-acetyl-alpha-D-glucosamine is bound by residues tyrosine 366 and asparagine 377. Acetyl-CoA-binding positions include alanine 380, 386–387, serine 405, alanine 423, and arginine 440; that span reads NY.

This sequence in the N-terminal section; belongs to the N-acetylglucosamine-1-phosphate uridyltransferase family. It in the C-terminal section; belongs to the transferase hexapeptide repeat family. As to quaternary structure, homotrimer. The cofactor is Mg(2+).

It localises to the cytoplasm. The catalysed reaction is alpha-D-glucosamine 1-phosphate + acetyl-CoA = N-acetyl-alpha-D-glucosamine 1-phosphate + CoA + H(+). The enzyme catalyses N-acetyl-alpha-D-glucosamine 1-phosphate + UTP + H(+) = UDP-N-acetyl-alpha-D-glucosamine + diphosphate. Its pathway is nucleotide-sugar biosynthesis; UDP-N-acetyl-alpha-D-glucosamine biosynthesis; N-acetyl-alpha-D-glucosamine 1-phosphate from alpha-D-glucosamine 6-phosphate (route II): step 2/2. It participates in nucleotide-sugar biosynthesis; UDP-N-acetyl-alpha-D-glucosamine biosynthesis; UDP-N-acetyl-alpha-D-glucosamine from N-acetyl-alpha-D-glucosamine 1-phosphate: step 1/1. The protein operates within bacterial outer membrane biogenesis; LPS lipid A biosynthesis. Catalyzes the last two sequential reactions in the de novo biosynthetic pathway for UDP-N-acetylglucosamine (UDP-GlcNAc). The C-terminal domain catalyzes the transfer of acetyl group from acetyl coenzyme A to glucosamine-1-phosphate (GlcN-1-P) to produce N-acetylglucosamine-1-phosphate (GlcNAc-1-P), which is converted into UDP-GlcNAc by the transfer of uridine 5-monophosphate (from uridine 5-triphosphate), a reaction catalyzed by the N-terminal domain. The protein is Bifunctional protein GlmU of Haemophilus influenzae (strain PittEE).